Consider the following 150-residue polypeptide: Arginine repressor (150 aa).

The protein belongs to the ArgR family.

The protein localises to the cytoplasm. It participates in amino-acid biosynthesis; L-arginine biosynthesis [regulation]. Regulates arginine biosynthesis genes. The chain is Arginine repressor from Staphylococcus carnosus (strain TM300).